The following is a 413-amino-acid chain: MKKSLLAVAVAGAVLLSSAVQAQTTPEGYQLQQVLMMSRHNLRAPLANNGSVLAQSTPNAWPAWDVPGGQLTTKGGVLEVYMGHYTREWLVAQGLIPSGECPAPDTVYAYANSLQRTVATAQFFITGAFPGCDIPVHHQEKMGTMDPTFNPVITDDSAAFRQQAVQAMEKARSQLHLDESYKLLEQITHYQDSPSCKEKHQCSLIDAKDTFSANYQQEPGVQGPLKVGNSLVDAFTLQYYEGFPMDQVAWGGIHTDRQWKVLSKLKNGYQDSLFTSPTVARNVAAPLVKYIDKVLVADRVSAPKVTVLVGHDSNIASLLTALDFKPYQLHDQYERTPIGGQLVFQRWHDGNANRDLMKIEYVYQSARQLRNAEALTLKSPAQRVTLELKGCPVDANGFCPLDKFDNVMNTAAK.

The signal sequence occupies residues 1–22 (MKKSLLAVAVAGAVLLSSAVQA). Substrate is bound at residue Arg39. Residue His40 is the Nucleophile of the active site. Residues Arg43, Arg116, and Glu218 each coordinate substrate. Asp312 (proton donor) is an active-site residue.

It belongs to the histidine acid phosphatase family. In terms of assembly, homodimer.

The protein resides in the periplasm. The enzyme catalyses alpha-D-glucose 1-phosphate + H2O = D-glucose + phosphate. The protein is Glucose-1-phosphatase (agp) of Salmonella typhimurium (strain LT2 / SGSC1412 / ATCC 700720).